Reading from the N-terminus, the 458-residue chain is Cysteine--tRNA ligase (458 aa).

Residue Cys29 participates in Zn(2+) binding. The short motif at 31-41 is the 'HIGH' region element; the sequence is MTVYDLCHLGH. Zn(2+)-binding residues include Cys213, His238, and Glu242. The short motif at 270–274 is the 'KMSKS' region element; it reads KMSKS. Lys273 lines the ATP pocket.

The protein belongs to the class-I aminoacyl-tRNA synthetase family. In terms of assembly, monomer. The cofactor is Zn(2+).

Its subcellular location is the cytoplasm. The enzyme catalyses tRNA(Cys) + L-cysteine + ATP = L-cysteinyl-tRNA(Cys) + AMP + diphosphate. The chain is Cysteine--tRNA ligase from Acidovorax sp. (strain JS42).